A 479-amino-acid polypeptide reads, in one-letter code: Glutamyl-tRNA(Gln) amidotransferase subunit A (479 aa).

Residues Lys-71 and Ser-146 each act as charge relay system in the active site. Ser-170 serves as the catalytic Acyl-ester intermediate.

It belongs to the amidase family. GatA subfamily. In terms of assembly, heterotrimer of A, B and C subunits.

It carries out the reaction L-glutamyl-tRNA(Gln) + L-glutamine + ATP + H2O = L-glutaminyl-tRNA(Gln) + L-glutamate + ADP + phosphate + H(+). In terms of biological role, allows the formation of correctly charged Gln-tRNA(Gln) through the transamidation of misacylated Glu-tRNA(Gln) in organisms which lack glutaminyl-tRNA synthetase. The reaction takes place in the presence of glutamine and ATP through an activated gamma-phospho-Glu-tRNA(Gln). The chain is Glutamyl-tRNA(Gln) amidotransferase subunit A from Lactobacillus gasseri (strain ATCC 33323 / DSM 20243 / BCRC 14619 / CIP 102991 / JCM 1131 / KCTC 3163 / NCIMB 11718 / NCTC 13722 / AM63).